The chain runs to 356 residues: Guanine nucleotide-binding protein alpha-15 subunit (356 aa).

A lipid anchor (N-myristoyl glycine) is attached at Gly-2. A lipid anchor (S-palmitoyl cysteine) is attached at Cys-5. The region spanning 33 to 356 is the G-alpha domain; sequence GNQKLLLLGT…GRNLRGTGME (324 aa). The interval 36-49 is G1 motif; that stretch reads KLLLLGTGECGKST. Residues 41–48, 177–183, 202–206, 271–274, and Ala-328 each bind GTP; these read GTGECGKS, LRIRIPT, DVGGQ, and NKRD. Residues Ser-48 and Thr-183 each coordinate Mg(2+). Positions 175–183 are G2 motif; it reads DMLRIRIPT. The tract at residues 198–207 is G3 motif; sequence FRIYDVGGQR. The interval 267–274 is G4 motif; that stretch reads ILFLNKRD. The tract at residues 326 to 331 is G5 motif; sequence TCATDT.

The protein belongs to the G-alpha family. In terms of assembly, g proteins are composed of 3 units; alpha, beta and gamma. The alpha chain contains the guanine nucleotide binding site.

Functionally, guanine nucleotide-binding proteins (G proteins) are involved as modulators or transducers in various transmembrane signaling systems. The polypeptide is Guanine nucleotide-binding protein alpha-15 subunit (gpa-15) (Caenorhabditis elegans).